Reading from the N-terminus, the 221-residue chain is Eukaryotic translation initiation factor 3 subunit K (221 aa).

A PCI domain is found at 46-215 (YDLEANLACL…EKIEFDNLAP (170 aa)).

Belongs to the eIF-3 subunit K family. In terms of assembly, component of the eukaryotic translation initiation factor 3 (eIF-3) complex.

It localises to the cytoplasm. Functionally, component of the eukaryotic translation initiation factor 3 (eIF-3) complex, which is involved in protein synthesis of a specialized repertoire of mRNAs and, together with other initiation factors, stimulates binding of mRNA and methionyl-tRNAi to the 40S ribosome. The eIF-3 complex specifically targets and initiates translation of a subset of mRNAs involved in cell proliferation. The polypeptide is Eukaryotic translation initiation factor 3 subunit K (Anopheles gambiae (African malaria mosquito)).